Reading from the N-terminus, the 136-residue chain is Probable S-adenosyl-L-methionine-binding protein PH1056 (136 aa).

The 119-residue stretch at 8-126 (IVPVGYIRKE…FPERYDCPKE (119 aa)) folds into the TsaA-like domain. S-adenosyl-L-methionine contacts are provided by residues 48–49 (HK), Arg-78, and 106–109 (EDGT).

This sequence belongs to the tRNA methyltransferase O family.

The sequence is that of Probable S-adenosyl-L-methionine-binding protein PH1056 from Pyrococcus horikoshii (strain ATCC 700860 / DSM 12428 / JCM 9974 / NBRC 100139 / OT-3).